Reading from the N-terminus, the 45-residue chain is Mu-conotoxin-like Cal 12.1.2a (45 aa).

Disulfide bonds link Cys3–Cys16, Cys11–Cys28, Cys18–Cys33, and Cys27–Cys39. Pro23 carries the 4-hydroxyproline modification. A 6'-bromotryptophan mark is found at Trp37 and Trp38. Residue Pro40 is modified to 4-hydroxyproline. At Trp44 the chain carries 6'-bromotryptophan.

Expressed by the venom duct.

It localises to the secreted. Functionally, mu-conotoxins block voltage-gated sodium channels. This toxin reversibly blocks voltage-gated sodium channel in cephalopods, with no alteration in the voltage dependence of sodium conductance or on the kinetics of inactivation. The polypeptide is Mu-conotoxin-like Cal 12.1.2a (Californiconus californicus (California cone)).